The chain runs to 732 residues: Ferric aerobactin receptor (732 aa).

The signal sequence occupies residues 1 to 25; that stretch reads MMISKKYTLWALNPLLLTMMAPAVA. A TonB box motif is present at residues 31 to 38; sequence ETFVVSAN. Positions 43-153 constitute a TBDR plug domain; that stretch reads TVAEMAQTTW…TGGLINIVTK (111 aa). The region spanning 158–732 is the TBDR beta-barrel domain; that stretch reads ETMMEFEAGT…TFGLNYSVLF (575 aa). The TonB C-terminal box signature appears at 715-732; it reads YDYKGRGRTFGLNYSVLF.

This sequence belongs to the TonB-dependent receptor family.

It localises to the cell outer membrane. Receptor for cloacin DF13/aerobactin. The protein is Ferric aerobactin receptor (iutA) of Escherichia coli.